Here is a 251-residue protein sequence, read N- to C-terminus: Small ribosomal subunit protein uS2 (251 aa).

The segment at Glu-232 to Asp-251 is disordered.

This sequence belongs to the universal ribosomal protein uS2 family.

This is Small ribosomal subunit protein uS2 from Chlorobaculum parvum (strain DSM 263 / NCIMB 8327) (Chlorobium vibrioforme subsp. thiosulfatophilum).